Reading from the N-terminus, the 484-residue chain is tRNA sulfurtransferase (484 aa).

Residues 63–167 (QAFGERLACI…RDKLYMVTKR (105 aa)) enclose the THUMP domain. ATP contacts are provided by residues 185–186 (LI), K267, G289, and Q298. A disulfide bridge connects residues C346 and C458. Residues 406–484 (IETNEVVIDI…GYTNVKVYRP (79 aa)) form the Rhodanese domain. C458 (cysteine persulfide intermediate) is an active-site residue.

Belongs to the ThiI family.

It is found in the cytoplasm. The enzyme catalyses [ThiI sulfur-carrier protein]-S-sulfanyl-L-cysteine + a uridine in tRNA + 2 reduced [2Fe-2S]-[ferredoxin] + ATP + H(+) = [ThiI sulfur-carrier protein]-L-cysteine + a 4-thiouridine in tRNA + 2 oxidized [2Fe-2S]-[ferredoxin] + AMP + diphosphate. The catalysed reaction is [ThiS sulfur-carrier protein]-C-terminal Gly-Gly-AMP + S-sulfanyl-L-cysteinyl-[cysteine desulfurase] + AH2 = [ThiS sulfur-carrier protein]-C-terminal-Gly-aminoethanethioate + L-cysteinyl-[cysteine desulfurase] + A + AMP + 2 H(+). The protein operates within cofactor biosynthesis; thiamine diphosphate biosynthesis. In terms of biological role, catalyzes the ATP-dependent transfer of a sulfur to tRNA to produce 4-thiouridine in position 8 of tRNAs, which functions as a near-UV photosensor. Also catalyzes the transfer of sulfur to the sulfur carrier protein ThiS, forming ThiS-thiocarboxylate. This is a step in the synthesis of thiazole, in the thiamine biosynthesis pathway. The sulfur is donated as persulfide by IscS. This Shewanella putrefaciens (strain CN-32 / ATCC BAA-453) protein is tRNA sulfurtransferase.